Consider the following 190-residue polypeptide: MPKASEVKKNAAIEHNDKVYVVKDINKLTPSGRAGASLYRMRLYEVTTGAKADESFKADEMIKTADFVRQPVTFSYIDGDEYVFMNSEDYTPYNINKETIEEELLFIAEDTTGLQVMIVNGSAVGIELPPNVELVITETDPSIKGASASARTKPATLSTGLTVQVPEYISSGERIKISTSEHKFVSRADK.

Belongs to the elongation factor P family.

This is Elongation factor P-like protein from Pseudoalteromonas atlantica (strain T6c / ATCC BAA-1087).